A 104-amino-acid chain; its full sequence is DNA-directed RNA polymerase subunit omega (104 aa).

It belongs to the RNA polymerase subunit omega family. In terms of assembly, the RNAP catalytic core consists of 2 alpha, 1 beta, 1 beta' and 1 omega subunit. When a sigma factor is associated with the core the holoenzyme is formed, which can initiate transcription.

The catalysed reaction is RNA(n) + a ribonucleoside 5'-triphosphate = RNA(n+1) + diphosphate. In terms of biological role, promotes RNA polymerase assembly. Latches the N- and C-terminal regions of the beta' subunit thereby facilitating its interaction with the beta and alpha subunits. The protein is DNA-directed RNA polymerase subunit omega of Streptococcus suis (strain 05ZYH33).